Here is a 642-residue protein sequence, read N- to C-terminus: Threonine--tRNA ligase (642 aa).

One can recognise a TGS domain in the interval 1 to 61 (MPVITLPDGS…ENDATLSIIT (61 aa)). Residues 243–534 (DHRKIGKQLD…LTEEFAGFFP (292 aa)) are catalytic. 3 residues coordinate Zn(2+): C334, H385, and H511.

Belongs to the class-II aminoacyl-tRNA synthetase family. As to quaternary structure, homodimer. Requires Zn(2+) as cofactor.

The protein resides in the cytoplasm. It catalyses the reaction tRNA(Thr) + L-threonine + ATP = L-threonyl-tRNA(Thr) + AMP + diphosphate + H(+). In terms of biological role, catalyzes the attachment of threonine to tRNA(Thr) in a two-step reaction: L-threonine is first activated by ATP to form Thr-AMP and then transferred to the acceptor end of tRNA(Thr). Also edits incorrectly charged L-seryl-tRNA(Thr). The chain is Threonine--tRNA ligase from Salmonella paratyphi A (strain ATCC 9150 / SARB42).